The primary structure comprises 124 residues: Galanin peptides (124 aa).

Residues 1–19 (MARGSVILLGWLLLVVTLS) form the signal peptide. Residues 20–30 (ATLGLGMPAKE) constitute a propeptide that is removed on maturation. The residue at position 61 (threonine 61) is a Threonine amide. Residues serine 117 and serine 118 each carry the phosphoserine modification.

Belongs to the galanin family. In terms of tissue distribution, expressed in retinal progenitor cells and retinal ganglion cells (at protein level).

The protein localises to the secreted. Functionally, endocrine hormone of the central and peripheral nervous systems that binds and activates the G protein-coupled receptors GALR1, GALR2, and GALR3. This small neuropeptide may regulate diverse physiologic functions including contraction of smooth muscle of the gastrointestinal and genitourinary tract, growth hormone and insulin release and adrenal secretion. The polypeptide is Galanin peptides (Gal) (Mus musculus (Mouse)).